Here is a 628-residue protein sequence, read N- to C-terminus: Eukaryotic peptide chain release factor GTP-binding subunit ERF3B (628 aa).

The span at 1–10 shows a compositional bias: low complexity; the sequence is MDSGSSSSDS. Disordered regions lie at residues 1–49, 72–124, and 146–195; these read MDSG…SAFS, FLRG…LEGS, and LEES…VIVP. In terms of domain architecture, tr-type G spans 201-425; that stretch reads KEHVNVVFIG…YLDNLPNFNR (225 aa). The interval 210–217 is G1; sequence GHVDAGKS. 213–218 is a GTP binding site; that stretch reads DAGKST. The tract at residues 266–270 is G2; the sequence is GKTVE. A G3 region spans residues 287–290; it reads DAPG. Residues 349-352 and 391-393 contribute to the GTP site; these read NKMD and SGL. A G4 region spans residues 349–352; sequence NKMD. The tract at residues 391–393 is G5; the sequence is SGL.

This sequence belongs to the TRAFAC class translation factor GTPase superfamily. Classic translation factor GTPase family. ERF3 subfamily. As to quaternary structure, component of the eRF1-eRF3-GTP ternary complex, composed of ETF1/ERF1 and ERF3 (GSPT1/ERF3A or GSPT2/ERF3B) and GTP. Component of the transient SURF (SMG1-UPF1-eRF1-eRF3) complex. Interacts with UPF1 and PABPC1. Highly expressed in IUCC stage II colorectal cancer (CRC).

The protein localises to the cytoplasm. The enzyme catalyses GTP + H2O = GDP + phosphate + H(+). Its function is as follows. GTPase component of the eRF1-eRF3-GTP ternary complex, a ternary complex that mediates translation termination in response to the termination codons UAA, UAG and UGA. GSPT2/ERF3B mediates ETF1/ERF1 delivery to stop codons: The eRF1-eRF3-GTP complex binds to a stop codon in the ribosomal A-site. GTP hydrolysis by GSPT2/ERF3B induces a conformational change that leads to its dissociation, permitting ETF1/ERF1 to accommodate fully in the A-site. Component of the transient SURF complex which recruits UPF1 to stalled ribosomes in the context of nonsense-mediated decay (NMD) of mRNAs containing premature stop codons. This is Eukaryotic peptide chain release factor GTP-binding subunit ERF3B (GSPT2) from Homo sapiens (Human).